A 140-amino-acid polypeptide reads, in one-letter code: Small ribosomal subunit protein eS12 (140 aa).

Belongs to the eukaryotic ribosomal protein eS12 family. In terms of assembly, part of the small subunit (SSU) processome, composed of more than 70 proteins and the RNA chaperone small nucleolar RNA (snoRNA) U3. Subunit of the 40S ribosomal complex.

The protein localises to the nucleus. Its subcellular location is the nucleolus. Part of the small subunit (SSU) processome, first precursor of the small eukaryotic ribosomal subunit. During the assembly of the SSU processome in the nucleolus, many ribosome biogenesis factors, an RNA chaperone and ribosomal proteins associate with the nascent pre-rRNA and work in concert to generate RNA folding, modifications, rearrangements and cleavage as well as targeted degradation of pre-ribosomal RNA by the RNA exosome. Subunit of the 40S ribosomal complex. Involved in cold-warm shock-induced translocation of the RNA exosome components from the nucleolus to nucleoplasm. The protein is Small ribosomal subunit protein eS12 (rps-12) of Caenorhabditis elegans.